The following is a 739-amino-acid chain: uncharacterized protein (739 aa).

8 helical membrane-spanning segments follow: residues 53–73, 90–110, 114–134, 178–198, 421–441, 457–477, 491–511, and 532–552; these read LALG…ALTV, WHLF…AAIP, LMFI…GTFM, TYIL…QLGL, LIWI…VCIV, AFLR…LALM, GLAM…LPAV, and IVYF…SWMY.

The protein belongs to the aromatic acid exporter ArAE (TC 2.A.85) family.

Its subcellular location is the cell membrane. This is an uncharacterized protein from Gluconobacter oxydans (strain 621H) (Gluconobacter suboxydans).